We begin with the raw amino-acid sequence, 311 residues long: Probable manganese-dependent inorganic pyrophosphatase (311 aa).

Positions 9, 13, 15, 75, 97, and 149 each coordinate Mn(2+).

It belongs to the PPase class C family. Mn(2+) is required as a cofactor.

It is found in the cytoplasm. The catalysed reaction is diphosphate + H2O = 2 phosphate + H(+). This Shouchella clausii (strain KSM-K16) (Alkalihalobacillus clausii) protein is Probable manganese-dependent inorganic pyrophosphatase.